The sequence spans 203 residues: LexA repressor (203 aa).

The H-T-H motif DNA-binding region spans 28–48 (VRELCDELGFKSPNTAHFHLK). Active-site for autocatalytic cleavage activity residues include S122 and K159.

The protein belongs to the peptidase S24 family. As to quaternary structure, homodimer.

The catalysed reaction is Hydrolysis of Ala-|-Gly bond in repressor LexA.. Functionally, represses a number of genes involved in the response to DNA damage (SOS response), including recA and lexA. In the presence of single-stranded DNA, RecA interacts with LexA causing an autocatalytic cleavage which disrupts the DNA-binding part of LexA, leading to derepression of the SOS regulon and eventually DNA repair. The sequence is that of LexA repressor from Desulfatibacillum aliphaticivorans.